Consider the following 339-residue polypeptide: Dihydroorotate dehydrogenase (quinone) (339 aa).

Residues 64–68 (AGADK) and Thr88 contribute to the FMN site. A substrate-binding site is contributed by Lys68. 113-117 (NRNGF) provides a ligand contact to substrate. Asn141 and Asn174 together coordinate FMN. Position 174 (Asn174) interacts with substrate. Ser177 (nucleophile) is an active-site residue. Asn179 provides a ligand contact to substrate. FMN-binding residues include Lys219 and Thr247. Substrate is bound at residue 248-249 (NT). FMN-binding positions include Gly270, Gly299, and 320–321 (YS).

It belongs to the dihydroorotate dehydrogenase family. Type 2 subfamily. In terms of assembly, monomer. FMN serves as cofactor.

The protein resides in the cell membrane. It catalyses the reaction (S)-dihydroorotate + a quinone = orotate + a quinol. It functions in the pathway pyrimidine metabolism; UMP biosynthesis via de novo pathway; orotate from (S)-dihydroorotate (quinone route): step 1/1. Catalyzes the conversion of dihydroorotate to orotate with quinone as electron acceptor. The polypeptide is Dihydroorotate dehydrogenase (quinone) (pyrD) (Pasteurella multocida (strain Pm70)).